Consider the following 305-residue polypeptide: MEIPADLNLRKDVPLGDFTTWKVGGAADFFAEPDSSDHLEALVHWGRGQQLPMRFIGAGSNLLISDEGLAGLVICSRRLQGSQLDPTTGIIEAQAGEPLPTLARRAAKAGLSGLEWSVGIPGTVGGAVVMNAGAQGGCIAESLIDATVLDPSSGQTRRMSCNELDYDYRHSALQSEALVVLSARFRLQAGVDPSELSARTSSNLHKRTSTQPYQLPSCGSVFRNPEPQKAGRLIEGLGLKGHRIGGAEVSTLHANFIVNTGNAQAADMDALIRHVQAVVKQAHGLQLHPEVMRLGCFANSQAAAA.

One can recognise an FAD-binding PCMH-type domain in the interval lysine 22–glycine 190. Residue arginine 169 is part of the active site. Serine 220 functions as the Proton donor in the catalytic mechanism. Residue glutamate 290 is part of the active site.

It belongs to the MurB family. The cofactor is FAD.

The protein resides in the cytoplasm. It catalyses the reaction UDP-N-acetyl-alpha-D-muramate + NADP(+) = UDP-N-acetyl-3-O-(1-carboxyvinyl)-alpha-D-glucosamine + NADPH + H(+). It participates in cell wall biogenesis; peptidoglycan biosynthesis. Its function is as follows. Cell wall formation. The chain is UDP-N-acetylenolpyruvoylglucosamine reductase from Synechococcus sp. (strain RCC307).